Here is a 509-residue protein sequence, read N- to C-terminus: Transcription factor atf-7 (509 aa).

Positions 283–303 (TVSSYHSPLGASSQPPSTQKS) are enriched in polar residues. 2 disordered regions span residues 283-318 (TVSSYHSPLGASSQPPSTQKSPADGSWDHINGEKQI) and 337-400 (NMSS…ILER). Residues 308–318 (SWDHINGEKQI) are compositionally biased toward basic and acidic residues. The span at 337 to 364 (NMSSSGSDQDQSADMSNAGSTASTSTGN) shows a compositional bias: low complexity. The segment covering 390 to 400 (PDERRNTILER) has biased composition (basic and acidic residues). The bZIP domain occupies 391 to 464 (DERRNTILER…TERESRCVCL (74 aa)). The interval 393–413 (RRNTILERNKAAAVRYRKRKK) is basic motif. Residues 419–450 (MMGRVQAMEAEKNQLLAIQTQNQVLRRELERV) are leucine-zipper.

This sequence belongs to the bZIP family. As to quaternary structure, interacts with serine/threonine kinase pmk-1; perhaps in a manner dependent on dual specificity protein kinase sek-1. As to expression, expressed in intestinal cells.

The protein localises to the nucleus. It is found in the chromosome. Its function is as follows. Transcription factor which regulates the transcription of various genes, including those involved in innate immunity and oxidative stress responses. Binds to promoter regions of genes, probably at 5'-[GACGTCA]-3' consensus sequences. Together with transcription factor daf-19, involved in regulation of the serotonergic response of ADF neurons to pathogenic food. Modulates response to infection by the Gram-negative bacterium P.aeruginosa, acting downstream of the p38 signal transduction pathway effector serine/threonine kinase pmk-1. May act with transcription factor elt-2 to control p38 gene induction in response to bacterial infection. May be phosphorylated by pmk-1. Regulates transcription of the metallothionein gene, mtl-1, perhaps acting downstream of pmk-1. The chain is Transcription factor atf-7 from Caenorhabditis elegans.